The sequence spans 437 residues: Ribosomal protein uS12 methylthiotransferase RimO (437 aa).

An MTTase N-terminal domain is found at 5–116 (PTIAISHLGC…IVEIVERVET (112 aa)). 6 residues coordinate [4Fe-4S] cluster: cysteine 14, cysteine 50, cysteine 79, cysteine 154, cysteine 158, and cysteine 161. A Radical SAM core domain is found at 140-369 (TTSEGVAYLR…MLTQQPISER (230 aa)). The 66-residue stretch at 372 to 437 (QAYIGQTVDV…DTYDLYGEIV (66 aa)) folds into the TRAM domain.

It belongs to the methylthiotransferase family. RimO subfamily. The cofactor is [4Fe-4S] cluster.

The protein resides in the cytoplasm. The catalysed reaction is L-aspartate(89)-[ribosomal protein uS12]-hydrogen + (sulfur carrier)-SH + AH2 + 2 S-adenosyl-L-methionine = 3-methylsulfanyl-L-aspartate(89)-[ribosomal protein uS12]-hydrogen + (sulfur carrier)-H + 5'-deoxyadenosine + L-methionine + A + S-adenosyl-L-homocysteine + 2 H(+). Catalyzes the methylthiolation of an aspartic acid residue of ribosomal protein uS12. The sequence is that of Ribosomal protein uS12 methylthiotransferase RimO from Microcystis aeruginosa (strain NIES-843 / IAM M-2473).